We begin with the raw amino-acid sequence, 431 residues long: SPI-1 type 3 secretion system ATPase (431 aa).

162–167 (GCGKTM) is a binding site for ATP.

It belongs to the ATPase alpha/beta chains family. T3SS ATPase subfamily. In terms of assembly, the core secretion machinery of the T3SS is composed of approximately 20 different proteins, including cytoplasmic components, a base, an export apparatus and a needle. This subunit is part of the cytosolic complex. Forms homohexamers.

It localises to the cytoplasm. The catalysed reaction is ATP + H2O + cellular proteinSide 1 = ADP + phosphate + cellular proteinSide 2.. ATPase component of the type III secretion system (T3SS), also called injectisome, which is used to inject bacterial effector proteins into eukaryotic host cells. Acts as a molecular motor to provide the energy that is required for the export of proteins. Required for type III secretion apparatus (T3SA) formation, proper protein secretion, host cell invasion and virulence. May play a critical role in T3SS substrate recognition, disassembly of the effector/chaperone complex and unfolding of the effector in an ATP-dependent manner prior to secretion. The polypeptide is SPI-1 type 3 secretion system ATPase (Salmonella typhi).